The sequence spans 110 residues: MSDTLNRVAQVLEDRKGADADSSYVASLYHKGLNKILEKLGEESVETIIAAKDAQISGDCSDVIYETADLWFHSLVMLAQLGQHPQAVLDELDRRFGLSGHAEKASRPSA.

The protein belongs to the PRA-PH family.

Its subcellular location is the cytoplasm. It carries out the reaction 1-(5-phospho-beta-D-ribosyl)-ATP + H2O = 1-(5-phospho-beta-D-ribosyl)-5'-AMP + diphosphate + H(+). Its pathway is amino-acid biosynthesis; L-histidine biosynthesis; L-histidine from 5-phospho-alpha-D-ribose 1-diphosphate: step 2/9. The chain is Phosphoribosyl-ATP pyrophosphatase from Pseudomonas fluorescens (strain SBW25).